Reading from the N-terminus, the 237-residue chain is UPF0758 protein Veis_1654 (237 aa).

In terms of domain architecture, MPN spans 115-237 (VFDTPDAVKH…ALSMAEMGLL (123 aa)). Residues His186, His188, and Asp199 each coordinate Zn(2+). The short motif at 186-199 (HNHPSGSVQPSRAD) is the JAMM motif element.

Belongs to the UPF0758 family.

The polypeptide is UPF0758 protein Veis_1654 (Verminephrobacter eiseniae (strain EF01-2)).